Consider the following 588-residue polypeptide: Adenine deaminase (588 aa).

Belongs to the metallo-dependent hydrolases superfamily. Adenine deaminase family. As to quaternary structure, homodimer. Mn(2+) serves as cofactor.

It catalyses the reaction adenine + H2O + H(+) = hypoxanthine + NH4(+). The polypeptide is Adenine deaminase (Escherichia coli O6:H1 (strain CFT073 / ATCC 700928 / UPEC)).